The sequence spans 739 residues: Phosphoribosylformylglycinamidine synthase subunit PurL (739 aa).

The active site involves His-54. Tyr-57 and Lys-96 together coordinate ATP. Glu-98 serves as a coordination point for Mg(2+). Residues 99–102 (SHNH) and Arg-121 contribute to the substrate site. Residue His-100 is the Proton acceptor of the active site. Residue Asp-122 coordinates Mg(2+). Gln-245 provides a ligand contact to substrate. Residue Asp-273 coordinates Mg(2+). 317–319 (ESQ) contributes to the substrate binding site. Positions 500 and 537 each coordinate ATP. Mg(2+) is bound at residue Asn-538. Ser-540 contacts substrate.

The protein belongs to the FGAMS family. In terms of assembly, monomer. Part of the FGAM synthase complex composed of 1 PurL, 1 PurQ and 2 PurS subunits.

Its subcellular location is the cytoplasm. The enzyme catalyses N(2)-formyl-N(1)-(5-phospho-beta-D-ribosyl)glycinamide + L-glutamine + ATP + H2O = 2-formamido-N(1)-(5-O-phospho-beta-D-ribosyl)acetamidine + L-glutamate + ADP + phosphate + H(+). It functions in the pathway purine metabolism; IMP biosynthesis via de novo pathway; 5-amino-1-(5-phospho-D-ribosyl)imidazole from N(2)-formyl-N(1)-(5-phospho-D-ribosyl)glycinamide: step 1/2. Functionally, part of the phosphoribosylformylglycinamidine synthase complex involved in the purines biosynthetic pathway. Catalyzes the ATP-dependent conversion of formylglycinamide ribonucleotide (FGAR) and glutamine to yield formylglycinamidine ribonucleotide (FGAM) and glutamate. The FGAM synthase complex is composed of three subunits. PurQ produces an ammonia molecule by converting glutamine to glutamate. PurL transfers the ammonia molecule to FGAR to form FGAM in an ATP-dependent manner. PurS interacts with PurQ and PurL and is thought to assist in the transfer of the ammonia molecule from PurQ to PurL. This is Phosphoribosylformylglycinamidine synthase subunit PurL from Bacillus cereus (strain B4264).